Consider the following 35-residue polypeptide: Kappa-theraphotoxin-Tb1b (35 aa).

3 disulfide bridges follow: cysteine 3/cysteine 18, cysteine 10/cysteine 23, and cysteine 17/cysteine 30.

It belongs to the neurotoxin 10 (Hwtx-1) family. 58 subfamily. Monomer. Expressed by the venom gland.

It is found in the secreted. In terms of biological role, low-affinity blocker of Kv4.2/KCND2 voltage-gated potassium channels. Is presumed to shift the voltage-dependence of channel activation to more depolarized potentials and to bind to the S3-S4 linker region of the voltage sensor domain. The polypeptide is Kappa-theraphotoxin-Tb1b (Theraphosa blondi (Goliath birdeating spider)).